The chain runs to 192 residues: UPF0312 protein ECA1782 (192 aa).

The N-terminal stretch at Met1–Ala23 is a signal peptide.

The protein belongs to the UPF0312 family. Type 1 subfamily.

It is found in the periplasm. In Pectobacterium atrosepticum (strain SCRI 1043 / ATCC BAA-672) (Erwinia carotovora subsp. atroseptica), this protein is UPF0312 protein ECA1782.